The primary structure comprises 1192 residues: Homeodomain-interacting protein kinase 3 (1192 aa).

Lys-27 is covalently cross-linked (Glycyl lysine isopeptide (Lys-Gly) (interchain with G-Cter in SUMO); alternate). Lys-27 participates in a covalent cross-link: Glycyl lysine isopeptide (Lys-Gly) (interchain with G-Cter in SUMO2); alternate. The region spanning 197 to 525 (YEVLDFLGRG…PIETLNHPFV (329 aa)) is the Protein kinase domain. ATP-binding positions include 203 to 211 (LGRGTFGQV) and Lys-226. Asp-322 acts as the Proton acceptor in catalysis. Tyr-359 carries the phosphotyrosine modification. Positions 767–921 (QNRSNSLQNT…NSMSDDEQES (155 aa)) are interaction with AR. The interaction with FAS stretch occupies residues 775-868 (NTNIPHSAFI…SPRPSLRECK (94 aa)). The interval 799-829 (CVDTQDNHTSEGEAGTCREASVRQDSSVSDK) is disordered. Residues 832–988 (QTIIIADSPS…ESGLSVDEHM (157 aa)) form a required for localization to nuclear speckles region. The tract at residues 843-895 (AVSVITISSDSDDEETSPRPSLRECKGSLDCEACQSTLNIDRMCSLSSPDSTL) is SUMO interaction motifs (SIM); required for nuclear localization and kinase activity. The segment at 847-857 (ITISSDSDDEE) is interaction with UBL1. Low complexity predominate over residues 889–906 (SSPDSTLSTSSSGQSSPS). 2 disordered regions span residues 889–943 (SSPD…PFAE) and 956–1023 (LGTC…KPAA). Residue Lys-1185 forms a Glycyl lysine isopeptide (Lys-Gly) (interchain with G-Cter in SUMO) linkage.

Belongs to the protein kinase superfamily. CMGC Ser/Thr protein kinase family. HIPK subfamily. Interacts with UBL1/SUMO-1. Interacts with and stabilizes ligand-bound androgen receptor (AR). Interacts with Nkx1-2. Interacts with FAS and DAXX. Probably part of a complex consisting of HIPK3, FAS and FADD. Binds to NR5A1/SF1, SPEN/MINT and RUNX2. Post-translationally, autophosphorylated, but autophosphorylation is not required for catalytic activity. May be sumoylated. Heart, skeletal muscle, spleen, testis and lung.

Its subcellular location is the cytoplasm. The protein localises to the nucleus. The catalysed reaction is L-seryl-[protein] + ATP = O-phospho-L-seryl-[protein] + ADP + H(+). It carries out the reaction L-threonyl-[protein] + ATP = O-phospho-L-threonyl-[protein] + ADP + H(+). Its function is as follows. Serine/threonine-protein kinase involved in transcription regulation, apoptosis and steroidogenic gene expression. Phosphorylates JUN and RUNX2. Seems to negatively regulate apoptosis by promoting FADD phosphorylation. Enhances androgen receptor-mediated transcription. May act as a transcriptional corepressor for NK homeodomain transcription factors. The phosphorylation of NR5A1 activates SF1 leading to increased steroidogenic gene expression upon cAMP signaling pathway stimulation. In osteoblasts, supports transcription activation: phosphorylates RUNX2 that synergizes with SPEN/MINT to enhance FGFR2-mediated activation of the osteocalcin FGF-responsive element (OCFRE). In Mus musculus (Mouse), this protein is Homeodomain-interacting protein kinase 3 (Hipk3).